A 29-amino-acid chain; its full sequence is Cyclotide mden-C (29 aa).

The cyclopeptide (Gly-Asn) cross-link spans 1-29 (GKPICGETCFKGKCYTPGCTCSYPVCKKN). 3 cysteine pairs are disulfide-bonded: C5–C19, C9–C21, and C14–C26.

The protein belongs to the cyclotide family. This is a cyclic peptide.

Functionally, probably participates in a plant defense mechanism. The sequence is that of Cyclotide mden-C from Melicytus dentatus (Tree violet).